A 160-amino-acid polypeptide reads, in one-letter code: Transcriptional repressor NrdR (160 aa).

The segment at 3–34 is a zinc-finger region; it reads CPFCGAEDTSVVDSRVSEEGSRIRRRRQCTAC. The ATP-cone domain occupies 49–139; sequence PQIIKQGGNR…VYRSFEDVGD (91 aa).

This sequence belongs to the NrdR family. Zn(2+) serves as cofactor.

Functionally, negatively regulates transcription of bacterial ribonucleotide reductase nrd genes and operons by binding to NrdR-boxes. This is Transcriptional repressor NrdR from Nitrosomonas eutropha (strain DSM 101675 / C91 / Nm57).